We begin with the raw amino-acid sequence, 93 residues long: Small ribosomal subunit protein bS20c (93 aa).

It belongs to the bacterial ribosomal protein bS20 family.

The protein resides in the plastid. It localises to the chloroplast. Binds directly to 16S ribosomal RNA. This is Small ribosomal subunit protein bS20c from Thalassiosira pseudonana (Marine diatom).